The following is an 865-amino-acid chain: Bifunctional uridylyltransferase/uridylyl-removing enzyme (865 aa).

Residues 1–318 (MPHVDLNPLK…FPRPDSDARL (318 aa)) are uridylyltransferase. Residues 319–675 (IDDDFRNLRE…VRPTEHGEGL (357 aa)) are uridylyl-removing. The HD domain occupies 437–559 (VDQHTLAVVR…VGDERRLAAL (123 aa)). 2 consecutive ACT domains span residues 676 to 762 (QVMV…RLPH) and 789 to 865 (RLSV…QQAA). A disordered region spans residues 747–767 (DPHAARHAHAPRRLPHSHARR). Residues 751-767 (ARHAHAPRRLPHSHARR) are compositionally biased toward basic residues.

It belongs to the GlnD family. It depends on Mg(2+) as a cofactor.

It catalyses the reaction [protein-PII]-L-tyrosine + UTP = [protein-PII]-uridylyl-L-tyrosine + diphosphate. It carries out the reaction [protein-PII]-uridylyl-L-tyrosine + H2O = [protein-PII]-L-tyrosine + UMP + H(+). With respect to regulation, uridylyltransferase (UTase) activity is inhibited by glutamine, while glutamine activates uridylyl-removing (UR) activity. Functionally, modifies, by uridylylation and deuridylylation, the PII regulatory proteins (GlnB and homologs), in response to the nitrogen status of the cell that GlnD senses through the glutamine level. Under low glutamine levels, catalyzes the conversion of the PII proteins and UTP to PII-UMP and PPi, while under higher glutamine levels, GlnD hydrolyzes PII-UMP to PII and UMP (deuridylylation). Thus, controls uridylylation state and activity of the PII proteins, and plays an important role in the regulation of nitrogen assimilation and metabolism. In Bordetella pertussis (strain Tohama I / ATCC BAA-589 / NCTC 13251), this protein is Bifunctional uridylyltransferase/uridylyl-removing enzyme.